The following is a 192-amino-acid chain: UPF0149 protein KPN78578_32810 (192 aa).

The protein belongs to the UPF0149 family.

This Klebsiella pneumoniae subsp. pneumoniae (strain ATCC 700721 / MGH 78578) protein is UPF0149 protein KPN78578_32810.